Consider the following 297-residue polypeptide: Vacuolar protein sorting-associated protein 26C (297 aa).

The protein belongs to the VPS26 family. Component of the commander complex that is essential for endosomal recycling of transmembrane cargos; the commander complex is composed of the CCC subcomplex and the retriever subcomplex. Component of the heterotrimeric retriever complex consisting of VPS26C, VPS29 and VPS35L; within the complex interacts with VPS35L. Interacts with SNX17 (via C-terminus); the interaction is direct and associates SNX17 with the retriever complex. Interacts with SNX31; the interaction is direct.

It localises to the endosome. Its function is as follows. Component of the commander complex that is essential for endosomal recycling of transmembrane cargos; the commander complex is composed of the CCC subcomplex and the retriever subcomplex. Component of the retriever complex, which is a heterotrimeric complex related to retromer cargo-selective complex (CSC) and essential for retromer-independent retrieval and recycling of numerous cargos such as integrin alpha-5/beta-1 (ITGA5:ITGB1). The recruitment of the retriever complex to the endosomal membrane involves CCC and WASH complexes. In the endosomes, drives the retriever and recycling of NxxY-motif-containing cargo proteins by coupling to SNX17, a cargo essential for the homeostatic maintenance of numerous cell surface proteins associated with processes that include cell migration, cell adhesion, nutrient supply and cell signaling. The protein is Vacuolar protein sorting-associated protein 26C (VPS26C) of Pongo abelii (Sumatran orangutan).